The chain runs to 208 residues: Bacitracin transport permease protein BCRB (208 aa).

The next 6 helical transmembrane spans lie at leucine 23–asparagine 43, valine 70–phenylalanine 90, phenylalanine 111–leucine 131, tyrosine 135–threonine 155, alanine 159–proline 179, and tyrosine 182–phenylalanine 202.

Its subcellular location is the cell membrane. In terms of biological role, part of the binding-protein-dependent transport system for bacitracin that confer resistance to this antibiotic; probably responsible for the translocation of the substrate across the membrane. This is Bacitracin transport permease protein BCRB (bcrB) from Bacillus licheniformis.